Here is a 150-residue protein sequence, read N- to C-terminus: Single-stranded DNA-binding protein rim1, mitochondrial (150 aa).

Residues 1 to 22 constitute a mitochondrion transit peptide; the sequence is MLFLKSSRAFSKRLFSSSTVRY. The region spanning 25–125 is the SSB domain; it reads IQRLTLTGNL…HVSADVLFYP (101 aa). The tract at residues 127–150 is disordered; it reads NKNGDESGEETHPELDADPMINSF. Positions 128 to 141 are enriched in basic and acidic residues; it reads KNGDESGEETHPEL.

It is found in the mitochondrion. Functionally, this protein binds preferentially and cooperatively to ss-DNA. Involved in mitochondrial DNA replication. This is Single-stranded DNA-binding protein rim1, mitochondrial (rim1) from Schizosaccharomyces pombe (strain 972 / ATCC 24843) (Fission yeast).